The primary structure comprises 346 residues: Probable electron transfer flavoprotein subunit alpha, mitochondrial (346 aa).

285–313 (LYVAIGISGAIQHLAGMKESKMIIAINKD) is a binding site for FAD.

The protein belongs to the ETF alpha-subunit/FixB family. As to quaternary structure, heterodimer of an alpha and a beta subunit. FAD serves as cofactor.

It is found in the mitochondrion matrix. In terms of biological role, the electron transfer flavoprotein serves as a specific electron acceptor for several dehydrogenases, including five acyl-CoA dehydrogenases, glutaryl-CoA and sarcosine dehydrogenase. It transfers the electrons to the main mitochondrial respiratory chain via ETF-ubiquinone oxidoreductase (ETF dehydrogenase). In Cryptococcus neoformans var. neoformans serotype D (strain B-3501A) (Filobasidiella neoformans), this protein is Probable electron transfer flavoprotein subunit alpha, mitochondrial (ETF1).